The primary structure comprises 151 residues: Transcriptional regulator MraZ (151 aa).

SpoVT-AbrB domains follow at residues 5–52 (IHQV…PLSE) and 81–124 (ATDL…SQEE).

It belongs to the MraZ family. In terms of assembly, forms oligomers.

The protein resides in the cytoplasm. The protein localises to the nucleoid. In Marinomonas sp. (strain MWYL1), this protein is Transcriptional regulator MraZ.